A 672-amino-acid polypeptide reads, in one-letter code: Glycine--tRNA ligase beta subunit (672 aa).

This sequence belongs to the class-II aminoacyl-tRNA synthetase family. In terms of assembly, tetramer of two alpha and two beta subunits.

The protein resides in the cytoplasm. The enzyme catalyses tRNA(Gly) + glycine + ATP = glycyl-tRNA(Gly) + AMP + diphosphate. The sequence is that of Glycine--tRNA ligase beta subunit (glyS) from Thermotoga maritima (strain ATCC 43589 / DSM 3109 / JCM 10099 / NBRC 100826 / MSB8).